Consider the following 249-residue polypeptide: Acetylglutamate kinase (249 aa).

Substrate is bound by residues 36–37 (GG), R58, and N147.

This sequence belongs to the acetylglutamate kinase family. ArgB subfamily.

The protein localises to the cytoplasm. The enzyme catalyses N-acetyl-L-glutamate + ATP = N-acetyl-L-glutamyl 5-phosphate + ADP. It functions in the pathway amino-acid biosynthesis; L-arginine biosynthesis; N(2)-acetyl-L-ornithine from L-glutamate: step 2/4. Its function is as follows. Catalyzes the ATP-dependent phosphorylation of N-acetyl-L-glutamate. The chain is Acetylglutamate kinase from Thermus thermophilus (strain ATCC 27634 / DSM 579 / HB8).